A 740-amino-acid chain; its full sequence is 1,4-alpha-glucan branching enzyme GlgB (740 aa).

D419 (nucleophile) is an active-site residue. Catalysis depends on E472, which acts as the Proton donor.

Belongs to the glycosyl hydrolase 13 family. GlgB subfamily. As to quaternary structure, monomer.

The catalysed reaction is Transfers a segment of a (1-&gt;4)-alpha-D-glucan chain to a primary hydroxy group in a similar glucan chain.. The protein operates within glycan biosynthesis; glycogen biosynthesis. In terms of biological role, catalyzes the formation of the alpha-1,6-glucosidic linkages in glycogen by scission of a 1,4-alpha-linked oligosaccharide from growing alpha-1,4-glucan chains and the subsequent attachment of the oligosaccharide to the alpha-1,6 position. The polypeptide is 1,4-alpha-glucan branching enzyme GlgB (Paramagnetospirillum magneticum (strain ATCC 700264 / AMB-1) (Magnetospirillum magneticum)).